The sequence spans 229 residues: Coiled-coil domain-containing protein 134 (229 aa).

The N-terminal stretch at 1–22 is a signal peptide; that stretch reads MDLLQFLAFLFVLLLSGMGATG. A short sequence motif (prevents secretion from ER) is located at residue Asn148. N-linked (GlcNAc...) asparagine glycosylation occurs at Asn148. The tract at residues 193–229 is disordered; sequence TDPFQKALREEEKRRKKEEKRKEIRKGPRISRSQSEL. Residues 196–218 adopt a coiled-coil conformation; that stretch reads FQKALREEEKRRKKEEKRKEIRK. The short motif at 206-213 is the Nuclear localization signal element; that stretch reads RRKKEEKR.

This sequence belongs to the CCDC134 family. Interacts with TADA2A. Associates with the PCAF complex via TADA2A binding. O-glycosylated, with additional sialic acid modifications. As to expression, expressed in cervical gland, cervical squamous epithelium, endometrium, stomach, kidney distal convoluted tubule, spermatogenic cells in testis, mammary gland, liver and striated muscle (at protein level). Also detected in placenta. Highest expression in testis relative to other tissues. Detected in T cells and dendritic cells; highly expressed in activated CD8(+) T cells, and also expressed at lower levels in CD4(+) T cells.

It localises to the endoplasmic reticulum lumen. It is found in the secreted. Its subcellular location is the cytoplasm. The protein localises to the nucleus. Functionally, molecular adapter required to prevent protein hyperglycosylation of HSP90B1: during translation, associates with nascent HSP90B1 and the STT3A catalytic component of the OST-A complex and tethers them to a specialized translocon that forms a microenvironment for HSP90B1 folding. In the CCDC134-containing translocon, STT3A associates with the SRT pseudosubstrate motif of HSP90B1, preventing access to facultative glycosylation sites until folding is completed, preventing hyperglycosylation and subsequent degradation of HSP90B1. In extracellular secreted form, promotes proliferation and activation of CD8(+) T-cells, suggesting a cytokine-like function. May inhibit ERK and JNK signaling activity. May suppress cell migration and invasion activity, via its effects on ERK and JNK signaling. May also localize in the nucleus: enhances stability of the PCAF histone acetyltransferase (HAT) complex member TADA2A and thus promotes PCAF-mediated histone acetyltransferase activity. Has a critical role in the regulation of osteogenesis and bone development. This chain is Coiled-coil domain-containing protein 134, found in Homo sapiens (Human).